The chain runs to 669 residues: GTP-binding protein 1 (669 aa).

Residues 1–32 (MATERSRSAMDSPVPASMFAPEPSSPGAARAA) are disordered. Residues serine 6, serine 8, serine 12, serine 24, serine 25, serine 44, serine 47, and serine 69 each carry the phosphoserine modification. In terms of domain architecture, tr-type G spans 158–389 (FLEVRVAVVG…LNLLSPRTSY (232 aa)). Positions 167 to 174 (GNVDAGKS) are G1. 167 to 174 (GNVDAGKS) contributes to the GTP binding site. Positions 206–210 (GRTSS) are G2. The G3 stretch occupies residues 252–255 (DLAG). GTP-binding positions include 252–256 (DLAGH) and 308–311 (TKID). The G4 stretch occupies residues 308–311 (TKID). A G5 region spans residues 366–368 (SNV). Positions 573–595 (LLQTTNNSPMNSKPQQIKMQSTK) are enriched in polar residues. Residues 573–669 (LLQTTNNSPM…GACVTPASGC (97 aa)) form a disordered region. A Phosphoserine modification is found at serine 580. Over residues 646 to 657 (GRRRGGQRHKVK) the composition is skewed to basic residues.

This sequence belongs to the TRAFAC class translation factor GTPase superfamily. Classic translation factor GTPase family. GTPBP1 subfamily. In terms of assembly, interacts with EXOSC2/RRP4, EXOSC3/RRP40, EXOSC5/RRP46, HNRNPD, HNRNPR and SYNCRIP. Identified in a complex with AANAT mRNA, but does not bind mRNA by itself.

The protein localises to the cytoplasm. Functionally, promotes degradation of target mRNA species. Plays a role in the regulation of circadian mRNA stability. Binds GTP and has GTPase activity. This is GTP-binding protein 1 (GTPBP1) from Homo sapiens (Human).